We begin with the raw amino-acid sequence, 2776 residues long: A-kinase anchor protein 13 (2776 aa).

11 disordered regions span residues 371–401 (KNKD…SCLQ), 452–518 (EPDA…TETT), 547–584 (PAEA…QSSP), 618–641 (TMPG…PAQS), 653–689 (EAGT…ESTM), 760–871 (VSQT…SPTA), 910–951 (ALGQ…IPGL), 995–1029 (GAAK…LPSG), 1431–1508 (LCDT…MDSI), 1527–1546 (PFRR…AEMN), and 1565–1603 (RRSF…FGGE). Over residues 389–401 (DSGSASHQDSCLQ) the composition is skewed to polar residues. An important for interaction with PRKAR2A region spans residues 493 to 515 (QNNKPQVGEGTKERLENSDSSTT). Residues 560–573 (PTEKPGMETQERGC) are compositionally biased toward basic and acidic residues. Over residues 659-672 (AEATHQPSTVTSSG) the composition is skewed to polar residues. A compositionally biased stretch (low complexity) spans 773–788 (SPPASSFSLASSPESE). Ser784 carries the post-translational modification Phosphoserine. Thr809 bears the Phosphothreonine mark. Composition is skewed to basic and acidic residues over residues 820–834 (DGPD…DKVG) and 914–940 (DGKD…EDQR). Thr941 is modified (phosphothreonine). The span at 1005 to 1020 (TSLSADSKQKASSTEQ) shows a compositional bias: polar residues. The span at 1433 to 1444 (DTTGSSSSTDDT) shows a compositional bias: low complexity. The span at 1454 to 1476 (GSDVSLPQTSKLNRSRNHQSANG) shows a compositional bias: polar residues. A phosphoserine mark is found at Ser1455, Ser1473, Ser1507, Ser1532, and Ser1569. Positions 1552-1678 (RALGHVVRRP…SRPFHSTSAN (127 aa)) are important for interaction with MAP2K3. Residues 1583–1594 (SSSLEMSSANSS) are compositionally biased toward low complexity. Phosphoserine is present on residues Ser1608, Ser1611, and Ser1613. Lys1637 carries the post-translational modification N6-methyllysine. Positions 1711 to 1756 (TFSYIRNKMSSSKKSKEKEKEKDKIKEKEKDSKEKEKDKKTLNGHT) are disordered. Basic and acidic residues predominate over residues 1724–1751 (KSKEKEKEKDKIKEKEKDSKEKEKDKKT). A Phorbol-ester/DAG-type zinc finger spans residues 1754–1801 (GHTFSPIPIVGPISCSQCMKPFTNKDAYTCAGCGAFVHKGCRENLASC). Phosphoserine occurs at positions 1839, 1858, and 1892. Residues 1882–2776 (MSNTWKFLSH…VPAEGEEIFC (895 aa)) form an interaction with ESR1 region. Thr1893 carries the phosphothreonine modification. Residues Ser1895 and Ser1908 each carry the phosphoserine modification. Residues 1957 to 2154 (KRQEVIYELM…KDVIGAVDSK (198 aa)) enclose the DH domain. Residues 2194 to 2296 (KLVRDGSVFL…WIQIIQDTIN (103 aa)) form the PH domain. Ser2308 and Ser2361 each carry phosphoserine. Residues 2308-2345 (SENEEEKKLLDTKARELKEQLQQKDQQILLLLEEKEMI) are a coiled coil. Phosphothreonine is present on Thr2431. Residues 2436-2471 (DCHQMNASKGGEKEEGDDGQDLRRTESDSGLKKGGN) are disordered. Residues 2455-2466 (QDLRRTESDSGL) show a composition bias toward basic and acidic residues. Phosphoserine is present on residues Ser2527 and Ser2530. The stretch at 2532–2646 (LIEQEKQRSL…ERLSQRQMDQ (115 aa)) forms a coiled coil. 2 disordered regions span residues 2549–2605 (ANLQ…EELQ) and 2626–2776 (EREQ…EIFC). Basic and acidic residues-rich tracts occupy residues 2558-2605 (HLEE…EELQ) and 2626-2640 (EREQ…ERLS). 3 stretches are compositionally biased toward polar residues: residues 2641 to 2653 (QRQM…QVSN), 2665 to 2700 (LPNS…SISR), and 2713 to 2727 (SASQ…SQAP). Phosphoserine is present on residues Ser2673 and Ser2692.

In terms of assembly, interacts with the cAMP-dependent protein kinase (PKA) holoenzyme and with the regulatory subunit PRKAR2A. Interacts with RHOA. Also interacts with RHOB and RHOC. Identified in a ternary complex with RHOA and PRKAR2A. Identified in a complex with NR3C1 and RHOA. Interacts with BRAF and KSR1. Identified in a complex with BRAF and KSR1. Component of a signaling complex containing at least AKAP13, PKN1, MAPK14, ZAK and MAP2K3. Within this complex, AKAP13 interacts directly with PKN1, which in turn recruits MAPK14, MAP2K3 and ZAK. Interacts (phosphorylated form) with YWHAB and YWHAZ. Interaction with YWHAB inhibits activation of RHOA, interferes with PKN1 binding and activation of MAP kinases. Interacts with GNA12. Interacts with IKBKB. Interacts with ESR1, THRA, PPARA and NME2. Interacts (via the C-terminal domain after the PH domain) with MEF2C and RXRB. Interacts (via the C-terminal domain after the PH domain) with PRKD1. Detected in embryonic heart, limb bud, first branchial arch and forebrain (at protein level). Detected in heart. Detected in perichondrium, but not in the bone growth plate.

The protein resides in the cytoplasm. Its subcellular location is the cytosol. It is found in the cell cortex. It localises to the cytoskeleton. The protein localises to the nucleus. The protein resides in the membrane. Scaffold protein that plays an important role in assembling signaling complexes downstream of several types of G protein-coupled receptors. Activates RHOA in response to signaling via G protein-coupled receptors via its function as Rho guanine nucleotide exchange factor. May also activate other Rho family members. Part of a kinase signaling complex that links ADRA1A and ADRA1B adrenergic receptor signaling to the activation of downstream p38 MAP kinases, such as MAPK11 and MAPK14. Part of a signaling complex that links ADRA1B signaling to the activation of RHOA and IKBKB/IKKB, leading to increased NF-kappa-B transcriptional activity. Part of a RHOA-dependent signaling cascade that mediates responses to lysophosphatidic acid (LPA), a signaling molecule that activates G-protein coupled receptors and potentiates transcriptional activation of the glucocorticoid receptor NR3C1. Part of a signaling cascade that stimulates MEF2C-dependent gene expression in response to lysophosphatidic acid (LPA). Part of a signaling pathway that activates MAPK11 and/or MAPK14 and leads to increased transcription activation of the estrogen receptors ESR1 and ESR2. Part of a signaling cascade that links cAMP and EGFR signaling to BRAF signaling and to PKA-mediated phosphorylation of KSR1, leading to the activation of downstream MAP kinases, such as MAPK1 or MAPK3. Functions as a scaffold protein that anchors cAMP-dependent protein kinase (PKA) and PRKD1. This promotes activation of PRKD1, leading to increased phosphorylation of HDAC5 and ultimately cardiomyocyte hypertrophy. Has no guanine nucleotide exchange activity on CDC42, Ras or Rac. Required for normal embryonic heart development, and in particular for normal sarcomere formation in the developing cardiomyocytes. Plays a role in cardiomyocyte growth and cardiac hypertrophy in response to activation of the beta-adrenergic receptor by phenylephrine or isoproterenol. Required for normal adaptive cardiac hypertrophy in response to pressure overload. Plays a role in osteogenesis. This Mus musculus (Mouse) protein is A-kinase anchor protein 13.